The following is a 94-amino-acid chain: Trp operon repressor homolog (94 aa).

A DNA-binding region spans residues 58–81 (QREIAEKYGVSIAQITRGSNALKG).

The protein belongs to the TrpR family. In terms of assembly, homodimer.

It localises to the cytoplasm. Its function is as follows. This protein is an aporepressor. When complexed with L-tryptophan it binds the operator region of the trp operon and prevents the initiation of transcription. The protein is Trp operon repressor homolog of Chlamydia trachomatis serovar A (strain ATCC VR-571B / DSM 19440 / HAR-13).